Here is a 100-residue protein sequence, read N- to C-terminus: Elevenin-Vc1 (100 aa).

The N-terminal stretch at 1–24 (MAPSQKALLVLVLSMLLTASDSWA) is a signal peptide. C29 and C38 are disulfide-bonded. A propeptide spanning residues 44–100 (KRGGDSLSVGGSAELDDALTDPFLRSEEPREWRELTRLSRVLQTFLSHPTGETEQHD) is cleaved from the precursor.

Belongs to the elevenin family. As to quaternary structure, monomer. In terms of tissue distribution, expressed by the venom duct.

Its subcellular location is the secreted. Functionally, may mimic the function of prey elevenin neuropeptide. In vivo, intracranial injection in mice induces hyperactivity (tested at 5 and 10 nM). The protein is Elevenin-Vc1 of Conus victoriae (Queen Victoria cone).